The chain runs to 249 residues: Imidazole glycerol phosphate synthase subunit HisF (249 aa).

Active-site residues include Asp11 and Asp130.

It belongs to the HisA/HisF family. Heterodimer of HisH and HisF.

Its subcellular location is the cytoplasm. The catalysed reaction is 5-[(5-phospho-1-deoxy-D-ribulos-1-ylimino)methylamino]-1-(5-phospho-beta-D-ribosyl)imidazole-4-carboxamide + L-glutamine = D-erythro-1-(imidazol-4-yl)glycerol 3-phosphate + 5-amino-1-(5-phospho-beta-D-ribosyl)imidazole-4-carboxamide + L-glutamate + H(+). It functions in the pathway amino-acid biosynthesis; L-histidine biosynthesis; L-histidine from 5-phospho-alpha-D-ribose 1-diphosphate: step 5/9. In terms of biological role, IGPS catalyzes the conversion of PRFAR and glutamine to IGP, AICAR and glutamate. The HisF subunit catalyzes the cyclization activity that produces IGP and AICAR from PRFAR using the ammonia provided by the HisH subunit. This Sulfolobus acidocaldarius (strain ATCC 33909 / DSM 639 / JCM 8929 / NBRC 15157 / NCIMB 11770) protein is Imidazole glycerol phosphate synthase subunit HisF.